A 402-amino-acid chain; its full sequence is Sensor protein kinase FleS (402 aa).

Positions 188–393 (SLAHQIRTPL…CATLILPLIP (206 aa)) constitute a Histidine kinase domain. The residue at position 191 (His191) is a Phosphohistidine; by autocatalysis.

The enzyme catalyses ATP + protein L-histidine = ADP + protein N-phospho-L-histidine.. In terms of biological role, member of the two-component regulatory system FleS/FleR that regulates the expression of multiple genes involved in flagellar synthesis, adhesion, swarming, motility and antibiotic resistance. May function as a membrane-associated protein kinase that phosphorylates FleR in response to environmental signals leading to activation of specific gene promoters. The polypeptide is Sensor protein kinase FleS (fleS) (Pseudomonas aeruginosa (strain ATCC 15692 / DSM 22644 / CIP 104116 / JCM 14847 / LMG 12228 / 1C / PRS 101 / PAO1)).